Here is a 490-residue protein sequence, read N- to C-terminus: Lignostilbene-alpha,beta-dioxygenase isozyme III (490 aa).

Residues histidine 167, histidine 218, histidine 285, and histidine 477 each contribute to the Fe cation site.

It belongs to the carotenoid oxygenase family. As to quaternary structure, homodimer of two beta subunits. Fe(2+) is required as a cofactor.

It catalyses the reaction 1,2-bis(4-hydroxy-3-methoxyphenyl)ethylene + O2 = 2 vanillin. Activity is high with beta-5 type stilbene and minimal with beta-1 type stilbene. A 4-hydroxyl group and trans-stilbene structure is essential for the binding of substrates to the enzyme. Catalyzes the cleavage of the interphenyl double bond (C alpha-C beta) of lignin-derived polyphenolic diaryl-propane type compounds (Stilbene). This Sphingomonas paucimobilis (Pseudomonas paucimobilis) protein is Lignostilbene-alpha,beta-dioxygenase isozyme III.